The chain runs to 107 residues: UPF0122 protein MYPE4850 (107 aa).

This sequence belongs to the UPF0122 family.

In terms of biological role, might take part in the signal recognition particle (SRP) pathway. This is inferred from the conservation of its genetic proximity to ftsY/ffh. May be a regulatory protein. The protein is UPF0122 protein MYPE4850 of Malacoplasma penetrans (strain HF-2) (Mycoplasma penetrans).